We begin with the raw amino-acid sequence, 343 residues long: Cilia- and flagella-associated protein 36 (343 aa).

Residues serine 85 and serine 147 each carry the phosphoserine modification. The stretch at 147–187 (SDLEQEEMKILREVLRKSKEEYDQEEERKRKKQSSEAKMEE) forms a coiled coil. Residues 165 to 188 (KEEYDQEEERKRKKQSSEAKMEEL) form a disordered region. Serine 201 carries the post-translational modification Phosphoserine. 2 stretches are compositionally biased toward basic and acidic residues: residues 279-293 (QKRDKLLSMRKDTRT) and 301-323 (QKGKPTREAEEMTEKPEMTAEEK). Positions 279–323 (QKRDKLLSMRKDTRTKQIQNTEQKGKPTREAEEMTEKPEMTAEEK) are disordered.

This sequence belongs to the CFAP36 family. Interacts with ARL3.

It is found in the nucleus. Its subcellular location is the cytoplasm. The protein resides in the cell projection. It localises to the cilium. The protein localises to the flagellum. Functionally, may act as an effector for ARL3. The polypeptide is Cilia- and flagella-associated protein 36 (Mus musculus (Mouse)).